The following is a 413-amino-acid chain: Coiled-coil domain-containing protein 83 (413 aa).

2 coiled-coil regions span residues 32–186 (HCQI…RIIR) and 215–255 (IWEN…QLFN).

The polypeptide is Coiled-coil domain-containing protein 83 (CCDC83) (Bos taurus (Bovine)).